Consider the following 275-residue polypeptide: MTAITISDQEYRDFCRFLESQCGIVLGDSKQYLVRSRLSPLVTKFKLSSLSDLLRDVVTGRNRDLRVAAVDAMTTNETLWFRDSYPFTVLADKLLPEMAANKRPIKIWSAASSSGQEPYSMAMTILEVQQKRPGLLPSVSITATDISASMLDMCRAGIYDNLALGRGLSPERRRVFFEDAGDGRMKVKDNVKRLVNFRPQNLMESYSLLGKFDIIFCRNVLIYFSPDMKSKVLNQMAASLNPGGYLLLGASESLTGLTDKFEMVRCNPGIIYKLK.

The CheR-type methyltransferase domain occupies M1–K275. Residues N76, T78, R82, E117, D145, N201 to L202, and R218 to N219 each bind S-adenosyl-L-methionine.

The catalysed reaction is L-glutamyl-[protein] + S-adenosyl-L-methionine = [protein]-L-glutamate 5-O-methyl ester + S-adenosyl-L-homocysteine. Functionally, methylation of the membrane-bound methyl-accepting chemotaxis proteins (MCP) to form gamma-glutamyl methyl ester residues in MCP. This Vibrio cholerae serotype O1 (strain ATCC 39315 / El Tor Inaba N16961) protein is Chemotaxis protein methyltransferase 1 (cheR1).